The following is a 174-amino-acid chain: Co-chaperone protein HscB homolog (174 aa).

A J domain is found at 2–74 (NYFELFKFSP…IRRAEHMLSL (73 aa)).

The protein belongs to the HscB family. In terms of assembly, interacts with HscA and stimulates its ATPase activity.

Functionally, co-chaperone involved in the maturation of iron-sulfur cluster-containing proteins. Seems to help targeting proteins to be folded toward HscA. In Shewanella baltica (strain OS155 / ATCC BAA-1091), this protein is Co-chaperone protein HscB homolog.